We begin with the raw amino-acid sequence, 232 residues long: Orotate phosphoribosyltransferase (232 aa).

5-phospho-alpha-D-ribose 1-diphosphate is bound by residues Arg107, Lys108, Lys111, His113, and 133–141 (EDLTTAGGS). Thr137 contacts orotate.

Belongs to the purine/pyrimidine phosphoribosyltransferase family. PyrE subfamily. In terms of assembly, homodimer. It depends on Mg(2+) as a cofactor.

It catalyses the reaction orotidine 5'-phosphate + diphosphate = orotate + 5-phospho-alpha-D-ribose 1-diphosphate. It participates in pyrimidine metabolism; UMP biosynthesis via de novo pathway; UMP from orotate: step 1/2. Functionally, catalyzes the transfer of a ribosyl phosphate group from 5-phosphoribose 1-diphosphate to orotate, leading to the formation of orotidine monophosphate (OMP). The sequence is that of Orotate phosphoribosyltransferase from Sinorhizobium fredii (strain NBRC 101917 / NGR234).